A 750-amino-acid polypeptide reads, in one-letter code: Photosystem I P700 chlorophyll a apoprotein A1 (750 aa).

Helical transmembrane passes span Val-70–Ala-93, Leu-156–His-179, Leu-195–Leu-219, Ile-291–Tyr-309, Trp-346–Tyr-369, Leu-385–Val-411, Ala-433–His-455, and Phe-531–Leu-549. Positions 573 and 582 each coordinate [4Fe-4S] cluster. Transmembrane regions (helical) follow at residues His-589–Trp-610 and Leu-664–Phe-686. Position 675 (His-675) interacts with chlorophyll a'. Chlorophyll a is bound by residues Met-683 and Tyr-691. Trp-692 provides a ligand contact to phylloquinone. A helical transmembrane segment spans residues Ala-724–Ala-744.

It belongs to the PsaA/PsaB family. The PsaA/B heterodimer binds the P700 chlorophyll special pair and subsequent electron acceptors. PSI consists of a core antenna complex that captures photons, and an electron transfer chain that converts photonic excitation into a charge separation. The eukaryotic PSI reaction center is composed of at least 11 subunits. P700 is a chlorophyll a/chlorophyll a' dimer, A0 is one or more chlorophyll a, A1 is one or both phylloquinones and FX is a shared 4Fe-4S iron-sulfur center. is required as a cofactor.

It is found in the plastid. It localises to the chloroplast thylakoid membrane. It carries out the reaction reduced [plastocyanin] + hnu + oxidized [2Fe-2S]-[ferredoxin] = oxidized [plastocyanin] + reduced [2Fe-2S]-[ferredoxin]. PsaA and PsaB bind P700, the primary electron donor of photosystem I (PSI), as well as the electron acceptors A0, A1 and FX. PSI is a plastocyanin-ferredoxin oxidoreductase, converting photonic excitation into a charge separation, which transfers an electron from the donor P700 chlorophyll pair to the spectroscopically characterized acceptors A0, A1, FX, FA and FB in turn. Oxidized P700 is reduced on the lumenal side of the thylakoid membrane by plastocyanin. This is Photosystem I P700 chlorophyll a apoprotein A1 from Amborella trichopoda.